The following is a 545-amino-acid chain: Thermosome subunit beta (545 aa).

The protein belongs to the TCP-1 chaperonin family. Forms a Heterooligomeric complex of two stacked eight-membered rings.

Molecular chaperone; binds unfolded polypeptides in vitro, and has a weak ATPase activity. The polypeptide is Thermosome subunit beta (thsB) (Thermococcus sp. (strain KS-8)).